We begin with the raw amino-acid sequence, 73 residues long: Putative antitoxin VapB38 (73 aa).

In terms of biological role, probable antitoxin component of a type II toxin-antitoxin (TA) system. Its putative cognate toxin is VapC38. The polypeptide is Putative antitoxin VapB38 (vapB38) (Mycobacterium tuberculosis (strain ATCC 25618 / H37Rv)).